The primary structure comprises 277 residues: Shikimate dehydrogenase (NADP(+)) (277 aa).

Residues 15–17 (SKS) and Thr62 each bind shikimate. Lys66 functions as the Proton acceptor in the catalytic mechanism. Position 78 (Glu78) interacts with NADP(+). Shikimate is bound by residues Asn87 and Asp103. Residues 127-131 (GAGGA), 151-156 (NRTHEK), and Gly238 each bind NADP(+).

This sequence belongs to the shikimate dehydrogenase family. Homodimer.

It carries out the reaction shikimate + NADP(+) = 3-dehydroshikimate + NADPH + H(+). It participates in metabolic intermediate biosynthesis; chorismate biosynthesis; chorismate from D-erythrose 4-phosphate and phosphoenolpyruvate: step 4/7. Functionally, involved in the biosynthesis of the chorismate, which leads to the biosynthesis of aromatic amino acids. Catalyzes the reversible NADPH linked reduction of 3-dehydroshikimate (DHSA) to yield shikimate (SA). The sequence is that of Shikimate dehydrogenase (NADP(+)) from Shewanella frigidimarina (strain NCIMB 400).